A 144-amino-acid polypeptide reads, in one-letter code: Large ribosomal subunit protein uL16 (144 aa).

The protein belongs to the universal ribosomal protein uL16 family. As to quaternary structure, part of the 50S ribosomal subunit.

Binds 23S rRNA and is also seen to make contacts with the A and possibly P site tRNAs. This chain is Large ribosomal subunit protein uL16, found in Ligilactobacillus salivarius (strain UCC118) (Lactobacillus salivarius).